The following is a 1027-amino-acid chain: MTKEGMLSAAGRRFSRCAPSPRPRRNYALANIPPPAAVHIRTNDMISPEERRFLEAAELGNKPTLQECLDYDGDRRLNVNCLDSMGRTALEIAVDNENMEVVELLLQQPDIRIGNALLCAIREGVYRLVEVLVNHPNITREMLGDGWSQALDPSEAASAEYSSDISPVILAAQLNQFEILQMLIRKDASIEKPHRHSCICETCDRERLNDSLQYSLKRINTFRALASPAWMSLTSPDPILSAFKLSWDLQRLAFEEHEFKETYLQLSEQCKQYSCDLLSQCRSSEEVIAILNKDGNVNDDNIDVWASKLSLSRLKLAIKYEQKAFVSHPHCQQLLTSIWYEGIPYRQRSGTWANFFLYAFLLFLWPIFCLMYILMPKSRLGRLVRSPFMKFFYYSVSFATFLGLLTWATFEDYRYEKGERGGMTRASDRGPPATWVESLVFTWVIGMLWSEIKQLWEEGFKRYMRQWWNWLDFLMICLYLCTISIRLSAYYIFTYREDPYRYTVRTYWTSEEPMLVAEALFAVGNVFSFARIIYLFQTNPYLGPLQISLGCMLVDVAKFCFIFVLIISSFSIGLAQLYWYYDPNTDVCLPGATCKHSSNVFSSIADSYLTLLWSLFSITKPEDTDVVENHKITQWVGQGMFIMYHCTSIIVLLNMLIAMMSHSFQIINDHADLEWKFHRTKLWMAHFDEGSSLPPPFNIIVTPKSLIYVMNCLFNTVRWLLGKYTYQKNRNRATIRRPGYSRKRNEMEKSGGHDDDSLKPLTYADIITRLVARFIHQTKKDMKMDGVNEDDLHEIKQDISSLRYELRDDRRREIVRSSSHIDAVKRDIMRTMSTTSRRPYGGSMRLPKTRPSVAEESEEDDKSDETSSTDEEADETRSRKSSVLYIPPVNSTLPGIISEEAPVKKSTKRRASEADSKLPDRPLSDTYTSSFTPKLLPVFAQPPHSALRKTDTSMSFPINGTALDTSIVKPPRGVLRASQENLPAVELIETLKKEMNEKLDRLISGISENVKSPSPASHSHVGFNVEK.

The interval 1–22 (MTKEGMLSAAGRRFSRCAPSPR) is disordered. 3 ANK repeats span residues 85 to 115 (MGRT…RIGN), 117 to 141 (LLCA…ITRE), and 163 to 192 (SDIS…SIEK). 6 consecutive transmembrane segments (helical) span residues 355–375 (FFLY…YILM), 391–411 (FFYY…ATFE), 473–493 (FLMI…YYIF), 516–536 (VAEA…IYLF), 559–579 (FCFI…QLYW), and 640–660 (MFIM…IAMM). Disordered stretches follow at residues 825 to 929 (KRDI…TYTS) and 1008 to 1027 (ENVK…NVEK). The span at 855-874 (EESEEDDKSDETSSTDEEAD) shows a compositional bias: acidic residues. Positions 910-923 (RASEADSKLPDRPL) are enriched in basic and acidic residues. A compositionally biased stretch (polar residues) spans 1008–1017 (ENVKSPSPAS).

Belongs to the transient receptor (TC 1.A.4) family. STrpC subfamily.

Its subcellular location is the membrane. Functionally, could mediate calcium entry and form a calcium permeant channel. This chain is Transient-receptor-potential-like protein (trp-1), found in Caenorhabditis elegans.